We begin with the raw amino-acid sequence, 795 residues long: Protein Jade-3 (795 aa).

Positions 1–25 are enriched in low complexity; sequence MKRLRTPSSSDSSDNESPSTSFSSN. The segment at 1 to 41 is disordered; that stretch reads MKRLRTPSSSDSSDNESPSTSFSSNKYGSKPGTPASAQKKP. The PHD-type 1 zinc finger occupies 201-251; sequence DVICDVCRSPDSEEGNDMVFCDKCNICVHQACYGIVKVPDGNWLCRTCVLG. The C2HC pre-PHD-type zinc-finger motif lies at 253-287; it reads TPQCLLCPKTGGAMKATRAGTKWAHVSCALWIPEV. A PHD-type 2 zinc finger spans residues 311–367; it reads LICSLCKLKTGACIQCSVKNCTIPFHVTCAFEHSLEMKTILDEGDEVKFKSYCLKHS. Disordered regions lie at residues 630–654, 667–687, and 714–795; these read HGQSSNGKTKNEAEKSRQIKSNGIL, AASEKDPRSEISGKSQSSGFH, and FEKN…SVQR. 2 stretches are compositionally biased toward polar residues: residues 678 to 687 and 720 to 732; these read SGKSQSSGFH and KSSGFSKPLSTER.

The protein belongs to the JADE family. As to quaternary structure, component of the HBO1 complex.

Scaffold subunit of some HBO1 complexes, which have a histone H4 acetyltransferase activity. The polypeptide is Protein Jade-3 (jade3) (Danio rerio (Zebrafish)).